Consider the following 274-residue polypeptide: Rhamnulose-1-phosphate aldolase (274 aa).

E117 is an active-site residue. Residues H141, H143, and H212 each coordinate Zn(2+).

It belongs to the aldolase class II family. RhaD subfamily. In terms of assembly, homotetramer. It depends on Zn(2+) as a cofactor.

Its subcellular location is the cytoplasm. It catalyses the reaction L-rhamnulose 1-phosphate = (S)-lactaldehyde + dihydroxyacetone phosphate. It participates in carbohydrate degradation; L-rhamnose degradation; glycerone phosphate from L-rhamnose: step 3/3. In terms of biological role, catalyzes the reversible cleavage of L-rhamnulose-1-phosphate to dihydroxyacetone phosphate (DHAP) and L-lactaldehyde. In Pectobacterium carotovorum subsp. carotovorum (strain PC1), this protein is Rhamnulose-1-phosphate aldolase.